Reading from the N-terminus, the 314-residue chain is Bifunctional pinoresinol-lariciresinol reductase 3 (314 aa).

NADP(+) is bound by residues 11–17 (GGTGFIG), Arg36, and Lys45. Lys138 acts as the Proton acceptor in catalysis. Arg142 is a binding site for NADP(+). His272 lines the substrate pocket.

It belongs to the NmrA-type oxidoreductase family. Isoflavone reductase subfamily. Dimer.

It carries out the reaction (-)-lariciresinol + NADP(+) = (-)-pinoresinol + NADPH + H(+). The enzyme catalyses (+)-secoisolariciresinol + NADP(+) = (-)-lariciresinol + NADPH + H(+). In terms of biological role, reductase involved in lignan biosynthesis. Catalyzes the enantioselective sequential conversion of (-)-pinoresinol into (-)-lariciresinol and of (-)-lariciresinol into (+)-secoisolariciresinol. Abstracts the 4R-hydride from the NADPH cofactor during catalysis. The chain is Bifunctional pinoresinol-lariciresinol reductase 3 from Thuja plicata (Western red-cedar).